A 610-amino-acid chain; its full sequence is UvrABC system protein C (610 aa).

Residues 16 to 94 (SQPGVYRMYD…IKLYQPRYNV (79 aa)) form the GIY-YIG domain. Positions 204–239 (DQVLTQLIARMEKASQSLEFEEAARIRDQIQAVRRV) constitute a UVR domain. Residues 540 to 559 (HAISGHRKKRAKVKSTSSLE) are disordered. A compositionally biased stretch (basic residues) spans 543–552 (SGHRKKRAKV).

The protein belongs to the UvrC family. As to quaternary structure, interacts with UvrB in an incision complex.

The protein localises to the cytoplasm. Functionally, the UvrABC repair system catalyzes the recognition and processing of DNA lesions. UvrC both incises the 5' and 3' sides of the lesion. The N-terminal half is responsible for the 3' incision and the C-terminal half is responsible for the 5' incision. The chain is UvrABC system protein C from Klebsiella pneumoniae (strain 342).